The primary structure comprises 445 residues: Phosphoglucosamine mutase (445 aa).

Serine 102 (phosphoserine intermediate) is an active-site residue. Residues serine 102, aspartate 241, aspartate 243, and aspartate 245 each contribute to the Mg(2+) site. Phosphoserine is present on serine 102.

Belongs to the phosphohexose mutase family. Mg(2+) serves as cofactor. Post-translationally, activated by phosphorylation.

It carries out the reaction alpha-D-glucosamine 1-phosphate = D-glucosamine 6-phosphate. Its function is as follows. Catalyzes the conversion of glucosamine-6-phosphate to glucosamine-1-phosphate. The protein is Phosphoglucosamine mutase of Cronobacter sakazakii (strain ATCC BAA-894) (Enterobacter sakazakii).